A 204-amino-acid polypeptide reads, in one-letter code: Large ribosomal subunit protein uL4 (204 aa).

Positions 56 to 79 are disordered; it reads VSGTTAKPYGQKRTGRARQGSLRS.

Belongs to the universal ribosomal protein uL4 family. Part of the 50S ribosomal subunit.

In terms of biological role, one of the primary rRNA binding proteins, this protein initially binds near the 5'-end of the 23S rRNA. It is important during the early stages of 50S assembly. It makes multiple contacts with different domains of the 23S rRNA in the assembled 50S subunit and ribosome. Forms part of the polypeptide exit tunnel. This is Large ribosomal subunit protein uL4 from Wolbachia pipientis subsp. Culex pipiens (strain wPip).